The following is a 74-amino-acid chain: Homeobox protein H40 (74 aa).

Residues 8 to 67 constitute a DNA-binding region (homeobox); that stretch reads ARRARTAFTYEQLVALENKFKTTRYLSVCERLNLALSLSLTETQVKIWFQNRRTKWKKQN.

The protein resides in the nucleus. The polypeptide is Homeobox protein H40 (Apis mellifera (Honeybee)).